Reading from the N-terminus, the 1588-residue chain is Pentafunctional AROM polypeptide (1588 aa).

Positions 1-392 are 3-dehydroquinate synthase; that stretch reads MVQLAKVPIL…YGDSAQFVSD (392 aa). Residues 43–45, 78–81, 109–111, and aspartate 114 contribute to the NAD(+) site; these read DTN, ETSK, and GGV. 7-phospho-2-dehydro-3-deoxy-D-arabino-heptonate is bound at residue arginine 125. 134 to 135 contributes to the NAD(+) binding site; sequence TS. Aspartate 141 and lysine 147 together coordinate 7-phospho-2-dehydro-3-deoxy-D-arabino-heptonate. Lysine 156 is an NAD(+) binding site. Asparagine 157 contributes to the 7-phospho-2-dehydro-3-deoxy-D-arabino-heptonate binding site. NAD(+) contacts are provided by residues 174–177 and asparagine 185; that span reads WLET. Glutamate 189 contacts Zn(2+). 7-phospho-2-dehydro-3-deoxy-D-arabino-heptonate contacts are provided by residues 189-192 and lysine 258; that span reads EVIK. Residue glutamate 268 is the Proton acceptor; for 3-dehydroquinate synthase activity of the active site. Residues 272 to 276 and histidine 279 contribute to the 7-phospho-2-dehydro-3-deoxy-D-arabino-heptonate site; that span reads RNLLN. Histidine 279 is a Zn(2+) binding site. Catalysis depends on histidine 283, which acts as the Proton acceptor; for 3-dehydroquinate synthase activity. 7-phospho-2-dehydro-3-deoxy-D-arabino-heptonate contacts are provided by histidine 295 and lysine 364. Histidine 295 contributes to the Zn(2+) binding site. Residues 405-871 are EPSP synthase; that stretch reads VYPFKDIPAD…WDVLHSELGA (467 aa). Cysteine 853 acts as the For EPSP synthase activity in catalysis. Residues 890-1080 are shikimate kinase; the sequence is SVVIIGMRAA…IPSGRSAFVC (191 aa). Position 895–902 (895–902) interacts with ATP; the sequence is GMRAAGKT. The interval 1081–1293 is 3-dehydroquinase; sequence LTFDDLTEQT…AAPGQLTVAQ (213 aa). Histidine 1198 acts as the Proton acceptor; for 3-dehydroquinate dehydratase activity in catalysis. Catalysis depends on lysine 1227, which acts as the Schiff-base intermediate with substrate; for 3-dehydroquinate dehydratase activity. The segment at 1306–1588 is shikimate dehydrogenase; sequence PKELFVVGKP…KAIFDAVTKE (283 aa).

This sequence in the N-terminal section; belongs to the sugar phosphate cyclases superfamily. Dehydroquinate synthase family. In the 2nd section; belongs to the EPSP synthase family. It in the 3rd section; belongs to the shikimate kinase family. The protein in the 4th section; belongs to the type-I 3-dehydroquinase family. This sequence in the C-terminal section; belongs to the shikimate dehydrogenase family. In terms of assembly, homodimer. Zn(2+) serves as cofactor.

The protein resides in the cytoplasm. The enzyme catalyses 7-phospho-2-dehydro-3-deoxy-D-arabino-heptonate = 3-dehydroquinate + phosphate. The catalysed reaction is 3-dehydroquinate = 3-dehydroshikimate + H2O. It carries out the reaction shikimate + NADP(+) = 3-dehydroshikimate + NADPH + H(+). It catalyses the reaction shikimate + ATP = 3-phosphoshikimate + ADP + H(+). The enzyme catalyses 3-phosphoshikimate + phosphoenolpyruvate = 5-O-(1-carboxyvinyl)-3-phosphoshikimate + phosphate. It functions in the pathway metabolic intermediate biosynthesis; chorismate biosynthesis; chorismate from D-erythrose 4-phosphate and phosphoenolpyruvate: step 2/7. Its pathway is metabolic intermediate biosynthesis; chorismate biosynthesis; chorismate from D-erythrose 4-phosphate and phosphoenolpyruvate: step 3/7. The protein operates within metabolic intermediate biosynthesis; chorismate biosynthesis; chorismate from D-erythrose 4-phosphate and phosphoenolpyruvate: step 4/7. It participates in metabolic intermediate biosynthesis; chorismate biosynthesis; chorismate from D-erythrose 4-phosphate and phosphoenolpyruvate: step 5/7. It functions in the pathway metabolic intermediate biosynthesis; chorismate biosynthesis; chorismate from D-erythrose 4-phosphate and phosphoenolpyruvate: step 6/7. Functionally, the AROM polypeptide catalyzes 5 consecutive enzymatic reactions in prechorismate polyaromatic amino acid biosynthesis. The sequence is that of Pentafunctional AROM polypeptide from Saccharomyces cerevisiae (strain JAY291) (Baker's yeast).